The primary structure comprises 126 residues: Adenosine 5'-monophosphoramidase HINT1 (126 aa).

The residue at position 2 (A2) is an N-acetylalanine. The HIT domain maps to 18–126 (IFGKIIRKEI…GGRQMNWPPG (109 aa)). N6-acetyllysine occurs at positions 21 and 30. AMP is bound at residue 43–44 (DI). Residues S45 and S72 each carry the phosphoserine modification. Residues N99, 105 to 107 (GQS), and 112 to 114 (HLH) contribute to the AMP site. The Histidine triad motif signature appears at 110–114 (HIHLH). Residue H112 is the Tele-AMP-histidine intermediate of the active site.

The protein belongs to the HINT family. Homodimer. Interacts with CDK7. Interacts with RUVBL1 and RUVBL2 and is associated with the LEF1/TCF1-CTNNB1 complex and with a KAT5 histone acetyltransferase complex. Identified in a complex with MITF and CTNNB1. Interacts with CDC34 and RBX1, and is part of a SCF (SKP2-CUL1-F-box protein) E3 ubiquitin-protein ligase complex. Interacts with SUMO1, SUMO2 and RGS17. Interacts with the Ten-1 ICD form of TENM1. Interacts with CALM1; interaction increases in the presence of calcium ions.

Its subcellular location is the cytoplasm. The protein resides in the nucleus. It carries out the reaction adenosine 5'-phosphoramidate + H2O = AMP + NH4(+). Functionally, exhibits adenosine 5'-monophosphoramidase activity, hydrolyzing purine nucleotide phosphoramidates with a single phosphate group such as adenosine 5'monophosphoramidate (AMP-NH2) to yield AMP and NH2. Hydrolyzes adenosine 5'monophosphomorpholidate (AMP-morpholidate) and guanosine 5'monophosphomorpholidate (GMP-morpholidate). Hydrolyzes lysyl-AMP (AMP-N-epsilon-(N-alpha-acetyl lysine methyl ester)) generated by lysine tRNA ligase, as well as Met-AMP, His-AMP and Asp-AMP, lysyl-GMP (GMP-N-epsilon-(N-alpha-acetyl lysine methyl ester)) and AMP-N-alanine methyl ester. Can also convert adenosine 5'-O-phosphorothioate and guanosine 5'-O-phosphorothioate to the corresponding nucleoside 5'-O-phosphates with concomitant release of hydrogen sulfide. In addition, functions as a scaffolding protein that modulates transcriptional activation by the LEF1/TCF1-CTNNB1 complex and by the complex formed with MITF and CTNNB1. Modulates p53/TP53 levels and p53/TP53-mediated apoptosis. Modulates proteasomal degradation of target proteins by the SCF (SKP2-CUL1-F-box protein) E3 ubiquitin-protein ligase complex. Also exhibits SUMO-specific isopeptidase activity, deconjugating SUMO1 from RANGAP1 and RGS17. The chain is Adenosine 5'-monophosphoramidase HINT1 (Hint1) from Rattus norvegicus (Rat).